Reading from the N-terminus, the 369-residue chain is UDP-N-acetylglucosamine--N-acetylmuramyl-(pentapeptide) pyrophosphoryl-undecaprenol N-acetylglucosamine transferase (369 aa).

UDP-N-acetyl-alpha-D-glucosamine contacts are provided by residues 10–12, N124, S195, I252, and Q297; that span reads TGG.

It belongs to the glycosyltransferase 28 family. MurG subfamily.

The protein localises to the cell membrane. It carries out the reaction Mur2Ac(oyl-L-Ala-gamma-D-Glu-L-Lys-D-Ala-D-Ala)-di-trans,octa-cis-undecaprenyl diphosphate + UDP-N-acetyl-alpha-D-glucosamine = beta-D-GlcNAc-(1-&gt;4)-Mur2Ac(oyl-L-Ala-gamma-D-Glu-L-Lys-D-Ala-D-Ala)-di-trans,octa-cis-undecaprenyl diphosphate + UDP + H(+). Its pathway is cell wall biogenesis; peptidoglycan biosynthesis. In terms of biological role, cell wall formation. Catalyzes the transfer of a GlcNAc subunit on undecaprenyl-pyrophosphoryl-MurNAc-pentapeptide (lipid intermediate I) to form undecaprenyl-pyrophosphoryl-MurNAc-(pentapeptide)GlcNAc (lipid intermediate II). This Leuconostoc citreum (strain KM20) protein is UDP-N-acetylglucosamine--N-acetylmuramyl-(pentapeptide) pyrophosphoryl-undecaprenol N-acetylglucosamine transferase.